Reading from the N-terminus, the 190-residue chain is Pyridoxal 5'-phosphate synthase subunit PdxT (190 aa).

46–48 is a binding site for L-glutamine; sequence GES. Residue Cys-78 is the Nucleophile of the active site. L-glutamine contacts are provided by residues Arg-106 and 135–136; that span reads IR. Active-site charge relay system residues include His-171 and Glu-173.

This sequence belongs to the glutaminase PdxT/SNO family. In terms of assembly, in the presence of PdxS, forms a dodecamer of heterodimers. Only shows activity in the heterodimer.

The enzyme catalyses aldehydo-D-ribose 5-phosphate + D-glyceraldehyde 3-phosphate + L-glutamine = pyridoxal 5'-phosphate + L-glutamate + phosphate + 3 H2O + H(+). It catalyses the reaction L-glutamine + H2O = L-glutamate + NH4(+). The protein operates within cofactor biosynthesis; pyridoxal 5'-phosphate biosynthesis. Its function is as follows. Catalyzes the hydrolysis of glutamine to glutamate and ammonia as part of the biosynthesis of pyridoxal 5'-phosphate. The resulting ammonia molecule is channeled to the active site of PdxS. This Dictyoglomus turgidum (strain DSM 6724 / Z-1310) protein is Pyridoxal 5'-phosphate synthase subunit PdxT.